Here is a 374-residue protein sequence, read N- to C-terminus: Inner membrane transport permease YhhJ (374 aa).

The Cytoplasmic portion of the chain corresponds to M1 to K22. Residues A23–T43 form a helical membrane-spanning segment. Residues P44–D172 are Periplasmic-facing. An ABC transmembrane type-2 domain is found at N133–T369. The helical transmembrane segment at P173–L193 threads the bilayer. At T194 to G229 the chain is on the cytoplasmic side. A helical transmembrane segment spans residues L230–V250. Residues P251–S255 lie on the Periplasmic side of the membrane. A helical membrane pass occupies residues I256–F276. At M277 to S283 the chain is on the cytoplasmic side. Residues M284 to G304 form a helical membrane-spanning segment. The Periplasmic portion of the chain corresponds to S305–E342. A helical transmembrane segment spans residues I343–L363. The Cytoplasmic portion of the chain corresponds to L364–A374.

The protein belongs to the ABC-2 integral membrane protein family.

The protein resides in the cell inner membrane. The chain is Inner membrane transport permease YhhJ (yhhJ) from Escherichia coli (strain K12).